The primary structure comprises 138 residues: ER-derived vesicles protein ERV14 (138 aa).

Over 2–6 the chain is Cytoplasmic; that stretch reads GAWLF. A helical transmembrane segment spans residues 7–27; that stretch reads ILAVVVNCINLFGQVHFTILY. The Extracellular portion of the chain corresponds to 28–52; the sequence is ADLEADYINPIELCSKVNKLITPEA. A helical membrane pass occupies residues 53–73; it reads ALHGALSLLFLLNGYWFVFLL. The Cytoplasmic segment spans residues 74-111; it reads NLPVLAYNLNKIYNKVQLLDATEIFRTLGKHKRESFLK. A helical membrane pass occupies residues 112–132; the sequence is LGFHLLMFFFYLYRMIMALIA. Topologically, residues 133-138 are extracellular; sequence ESGDDF.

The protein belongs to the cornichon family.

It is found in the endoplasmic reticulum membrane. It localises to the golgi apparatus membrane. Could regulate export of the bud site and axial growth sites selection protein AXL2 and possibly other secretory proteins from the endoplasmic reticulum in COPII-coated vesicles. Seems to be required for axial budding pattern in haploid cells. The chain is ER-derived vesicles protein ERV14 (ERV14) from Saccharomyces cerevisiae (strain ATCC 204508 / S288c) (Baker's yeast).